An 882-amino-acid polypeptide reads, in one-letter code: Alanine--tRNA ligase (882 aa).

Residues His-570, His-574, Cys-672, and His-676 each coordinate Zn(2+).

The protein belongs to the class-II aminoacyl-tRNA synthetase family. Zn(2+) is required as a cofactor.

It localises to the cytoplasm. It carries out the reaction tRNA(Ala) + L-alanine + ATP = L-alanyl-tRNA(Ala) + AMP + diphosphate. Catalyzes the attachment of alanine to tRNA(Ala) in a two-step reaction: alanine is first activated by ATP to form Ala-AMP and then transferred to the acceptor end of tRNA(Ala). Also edits incorrectly charged Ser-tRNA(Ala) and Gly-tRNA(Ala) via its editing domain. This chain is Alanine--tRNA ligase, found in Xanthomonas oryzae pv. oryzae (strain MAFF 311018).